The chain runs to 3841 residues: Transformation/transcription domain-associated protein (3841 aa).

Disordered stretches follow at residues 491 to 516 (TPTV…PPAT) and 2002 to 2027 (QQPE…MKRG). A compositionally biased stretch (pro residues) spans 498-515 (ALPPPAPPTPVTPAPPPA). Residues 2025–2040 (KRGMSVDSAQDVKRFR) carry the Bipartite nuclear localization signal motif. An FAT domain is found at 2671 to 3239 (VLKYLGKTHN…YFPIRTLYLT (569 aa)). Residues 3249-3271 (KSDSGQQQPSSAAAQTHSASDPG) are disordered. Residues 3251 to 3268 (DSGQQQPSSAAAQTHSAS) show a composition bias toward low complexity. The region spanning 3482–3805 (MPRVEIVQKH…AVTAIMTRLH (324 aa)) is the PI3K/PI4K catalytic domain. Positions 3488-3494 (VQKHNTA) are G-loop. Positions 3669–3677 (HLNRLNPEM) are catalytic loop. The interval 3689 to 3714 (VSYFRFDINDATGDLDANRPVPFRLT) is activation loop. Residues 3809 to 3841 (QFEGGESKVNTLVAAANSLDNLCRMDPAWHPWL) form the FATC domain.

Belongs to the PI3/PI4-kinase family. TRA1 subfamily.

It localises to the nucleus. Functionally, adapter protein, which is found in various multiprotein chromatin complexes with histone acetyltransferase activity (HAT), which gives a specific tag for epigenetic transcription activation. May be required for the mitotic checkpoint and normal cell cycle progression. May play a role in the formation and maintenance of the auditory system. This chain is Transformation/transcription domain-associated protein, found in Danio rerio (Zebrafish).